The sequence spans 332 residues: Glyceraldehyde-3-phosphate dehydrogenase (332 aa).

Residues 11-12 (RI), Asp-34, Arg-78, and Ser-120 each bind NAD(+). D-glyceraldehyde 3-phosphate-binding positions include 151–153 (SCT), Thr-182, Arg-197, 210–211 (TG), and Arg-233. Residue Cys-152 is the Nucleophile of the active site. Asn-314 contacts NAD(+).

It belongs to the glyceraldehyde-3-phosphate dehydrogenase family. Homotetramer.

It is found in the cytoplasm. It catalyses the reaction D-glyceraldehyde 3-phosphate + phosphate + NAD(+) = (2R)-3-phospho-glyceroyl phosphate + NADH + H(+). It functions in the pathway carbohydrate degradation; glycolysis; pyruvate from D-glyceraldehyde 3-phosphate: step 1/5. Catalyzes the oxidative phosphorylation of glyceraldehyde 3-phosphate (G3P) to 1,3-bisphosphoglycerate (BPG) using the cofactor NAD. The first reaction step involves the formation of a hemiacetal intermediate between G3P and a cysteine residue, and this hemiacetal intermediate is then oxidized to a thioester, with concomitant reduction of NAD to NADH. The reduced NADH is then exchanged with the second NAD, and the thioester is attacked by a nucleophilic inorganic phosphate to produce BPG. The chain is Glyceraldehyde-3-phosphate dehydrogenase (gap) from Kitasatospora aureofaciens (Streptomyces aureofaciens).